Reading from the N-terminus, the 299-residue chain is MARAQNEAASEVDGVLNLLKPPGMTSHDVVAFVRRALGVKKAGHTGTLDPGVAGVLPVCVGRATRLAEYIAGSDKAYRAEITFGVATDTQDGFGEVVAEADASHLTRGDVAYALTRFHGPIEQVPPMVSAVKVGGKRLYELARKGVEVEREPRRVFIHRLQLLDFRPGPRPVAYIDVVCSKGTYVRTLAHDLGRFLQVGAHLSYLVRTRSGPFVLAQAATLEELAAGKARLLPPAAALGDMPRVTVSGRAAARVLHGVAPAVRVEHPDGTTVAVVAANGALLALAEADGGGLRLRKVFG.

Asp49 (nucleophile) is an active-site residue. The PUA domain maps to 241-299; it reads MPRVTVSGRAAARVLHGVAPAVRVEHPDGTTVAVVAANGALLALAEADGGGLRLRKVFG.

The protein belongs to the pseudouridine synthase TruB family. Type 1 subfamily.

The catalysed reaction is uridine(55) in tRNA = pseudouridine(55) in tRNA. Functionally, responsible for synthesis of pseudouridine from uracil-55 in the psi GC loop of transfer RNAs. The chain is tRNA pseudouridine synthase B from Symbiobacterium thermophilum (strain DSM 24528 / JCM 14929 / IAM 14863 / T).